A 161-amino-acid chain; its full sequence is Anthranilate 1,2-dioxygenase small subunit (161 aa).

The protein belongs to the bacterial ring-hydroxylating dioxygenase beta subunit family. As to quaternary structure, part of a multicomponent enzyme system composed of a reductase (AndAa), a ferredoxin (AndAb) and a two-subunit oxygenase component (AndAc and AndAd).

It carries out the reaction anthranilate + NADH + O2 + 3 H(+) = catechol + NH4(+) + CO2 + NAD(+). The catalysed reaction is anthranilate + NADPH + O2 + 3 H(+) = catechol + NH4(+) + CO2 + NADP(+). Its pathway is aromatic compound metabolism; anthranilate degradation via hydroxylation; catechol from anthranilate: step 1/1. In terms of biological role, oxygenase component of anthranilate dioxygenase multicomponent enzyme system which catalyzes the incorporation of both atoms of molecular oxygen into anthranilate to form catechol. Can also act on benzoate and salicylate but not on 2-chlorobenzoate or o-toluate. This is Anthranilate 1,2-dioxygenase small subunit from Burkholderia cepacia (Pseudomonas cepacia).